A 250-amino-acid polypeptide reads, in one-letter code: 3-deoxy-manno-octulosonate cytidylyltransferase (250 aa).

This sequence belongs to the KdsB family.

The protein localises to the cytoplasm. It carries out the reaction 3-deoxy-alpha-D-manno-oct-2-ulosonate + CTP = CMP-3-deoxy-beta-D-manno-octulosonate + diphosphate. It participates in nucleotide-sugar biosynthesis; CMP-3-deoxy-D-manno-octulosonate biosynthesis; CMP-3-deoxy-D-manno-octulosonate from 3-deoxy-D-manno-octulosonate and CTP: step 1/1. The protein operates within bacterial outer membrane biogenesis; lipopolysaccharide biosynthesis. Activates KDO (a required 8-carbon sugar) for incorporation into bacterial lipopolysaccharide in Gram-negative bacteria. This Francisella tularensis subsp. holarctica (strain FTNF002-00 / FTA) protein is 3-deoxy-manno-octulosonate cytidylyltransferase.